Reading from the N-terminus, the 360-residue chain is Geranylgeranyl pyrophosphate synthase 9, chloroplastic (360 aa).

The N-terminal 39 residues, 1–39 (MATTVHLSSSSLFSQSRGRRDNSISSVKSLRKRTVLSLS), are a transit peptide targeting the chloroplast. Residues Lys106, Arg109, and His138 each contribute to the isopentenyl diphosphate site. Positions 145 and 151 each coordinate Mg(2+). Arg156 contacts dimethylallyl diphosphate. Arg157 contributes to the isopentenyl diphosphate binding site. Lys245, Thr246, Gln283, Lys300, and Lys310 together coordinate dimethylallyl diphosphate.

This sequence belongs to the FPP/GGPP synthase family. As to quaternary structure, monomer. No interactions with GGR. It depends on Mg(2+) as a cofactor.

It localises to the plastid. The protein localises to the chloroplast. It carries out the reaction isopentenyl diphosphate + dimethylallyl diphosphate = (2E)-geranyl diphosphate + diphosphate. It catalyses the reaction isopentenyl diphosphate + (2E)-geranyl diphosphate = (2E,6E)-farnesyl diphosphate + diphosphate. The enzyme catalyses isopentenyl diphosphate + (2E,6E)-farnesyl diphosphate = (2E,6E,10E)-geranylgeranyl diphosphate + diphosphate. It participates in isoprenoid biosynthesis; farnesyl diphosphate biosynthesis; farnesyl diphosphate from geranyl diphosphate and isopentenyl diphosphate: step 1/1. It functions in the pathway isoprenoid biosynthesis; geranyl diphosphate biosynthesis; geranyl diphosphate from dimethylallyl diphosphate and isopentenyl diphosphate: step 1/1. Its pathway is isoprenoid biosynthesis; geranylgeranyl diphosphate biosynthesis; geranylgeranyl diphosphate from farnesyl diphosphate and isopentenyl diphosphate: step 1/1. Functionally, catalyzes the trans-addition of the three molecules of IPP onto DMAPP to form geranylgeranyl pyrophosphate. This chain is Geranylgeranyl pyrophosphate synthase 9, chloroplastic (GGPPS9), found in Arabidopsis thaliana (Mouse-ear cress).